The chain runs to 264 residues: MINRNHRPLRGVLSDPDEPAAAAALAHRLDLPLLTEPPETPALFLHHSRNGLALRSSGSNAPGPIRVSLDEGRQGQRLRQASLKRETLARACGLRGGRSLRIVDATAGLGRDAMVLAALGARVTLIERHPVIAALLADGLRRARRSHPELAARLHLVEADSLQWLAELTPAERPEVICLDPMYPAGSTRGAVRKDLQALRELPDWPGLAPVDEVALLALARASATARVVVKRPGRAAPLAGKAPDWQLPGRSTRFDVYRGLAGD.

S-adenosyl-L-methionine contacts are provided by residues 111–112 (RD), 127–128 (ER), and D180.

This sequence belongs to the methyltransferase superfamily. RsmJ family.

It is found in the cytoplasm. It catalyses the reaction guanosine(1516) in 16S rRNA + S-adenosyl-L-methionine = N(2)-methylguanosine(1516) in 16S rRNA + S-adenosyl-L-homocysteine + H(+). Its function is as follows. Specifically methylates the guanosine in position 1516 of 16S rRNA. This is Ribosomal RNA small subunit methyltransferase J from Alkalilimnicola ehrlichii (strain ATCC BAA-1101 / DSM 17681 / MLHE-1).